A 393-amino-acid chain; its full sequence is tRNA(Met) cytidine acetate ligase (393 aa).

Glycine 81, asparagine 142, and arginine 167 together coordinate ATP.

The protein belongs to the TmcAL family.

It localises to the cytoplasm. It carries out the reaction cytidine(34) in elongator tRNA(Met) + acetate + ATP = N(4)-acetylcytidine(34) in elongator tRNA(Met) + AMP + diphosphate. Functionally, catalyzes the formation of N(4)-acetylcytidine (ac(4)C) at the wobble position of elongator tRNA(Met), using acetate and ATP as substrates. First activates an acetate ion to form acetyladenylate (Ac-AMP) and then transfers the acetyl group to tRNA to form ac(4)C34. The chain is tRNA(Met) cytidine acetate ligase from Bacillus mycoides (strain KBAB4) (Bacillus weihenstephanensis).